The following is a 1222-amino-acid chain: Alpha-mannosidase D (1222 aa).

The first 21 residues, 1 to 21 (MESSKFVKIIWVFGIWILVFT), serve as a signal peptide directing secretion. Residues 22–1170 (FLIIYNNYDY…KYNRPNHLAL (1149 aa)) are Extracellular-facing. 2 residues coordinate Zn(2+): His71 and Asp73. A glycan (N-linked (GlcNAc...) asparagine) is linked at Asn175. Residues Asp185 and His453 each coordinate Zn(2+). The active-site Nucleophile is the Asp185. 13 N-linked (GlcNAc...) asparagine glycosylation sites follow: Asn492, Asn496, Asn547, Asn551, Asn566, Asn613, Asn665, Asn768, Asn785, Asn952, Asn981, Asn1069, and Asn1084. The segment covering 493 to 549 (KSNNKTNNNNNNNNKNNNNNNNNNNNNNNNLKNTNSISTTGSSSSSGSGSSNNNNNT) has biased composition (low complexity). Residues 493–554 (KSNNKTNNNN…NNNNTVNKSE (62 aa)) are disordered. A helical transmembrane segment spans residues 1171–1191 (ILSLSIGIPAGILIIVIALVV). The Cytoplasmic segment spans residues 1192–1222 (TYKKRKNRKTLTSSNSSSNLIQQEDQTDYSP). Over residues 1202–1211 (LTSSNSSSNL) the composition is skewed to low complexity. Residues 1202-1222 (LTSSNSSSNLIQQEDQTDYSP) are disordered. A compositionally biased stretch (polar residues) spans 1212–1222 (IQQEDQTDYSP).

The protein belongs to the glycosyl hydrolase 38 family. Requires Zn(2+) as cofactor.

The protein localises to the membrane. It catalyses the reaction Hydrolysis of terminal, non-reducing alpha-D-mannose residues in alpha-D-mannosides.. This chain is Alpha-mannosidase D (manD), found in Dictyostelium discoideum (Social amoeba).